The following is a 325-amino-acid chain: MIELFVIKDTEWLELVAESVSLEGHRYQAPRSIEATIVTKQGDQTYYSVSEGDTVLFKWKGKELFRGIVFARTPDEHTLAFSAYDMLQYLVKNQDMYVFSNQRADQIIRRIASDFQIPTTSIANTGHTIKSLVIKNDTTLYDIILKALKQTKSQTGRHYQLYSEKGKLGLRAWPDPSEVWVLETGVNITGYQYSTSINDTATRVVLRRQKDNKTYKASAKDSSGLNKYGVLQYTETVTDDINQAQLQQRADVRLAEKKGVKKELKNIQAVGIPEVQSGLPVYISIPEAGIKKTYWVDTDRHEFKGTKHTMTIDVVEKNTMPEGVS.

The protein to B.subtilis YqbQ.

The sequence is that of Phage-like element PBSX protein XkdQ (xkdQ) from Bacillus subtilis (strain 168).